Consider the following 229-residue polypeptide: Ribonuclease 3 (229 aa).

The RNase III domain occupies 5–127; sequence LARLERKLGY…LIGAIYLDAD (123 aa). Residue glutamate 40 coordinates Mg(2+). Aspartate 44 is an active-site residue. 2 residues coordinate Mg(2+): aspartate 113 and glutamate 116. Glutamate 116 is an active-site residue. Residues 154–224 form the DRBM domain; it reads DPKTRLQEFL…AASALIALGV (71 aa).

Belongs to the ribonuclease III family. In terms of assembly, homodimer. Mg(2+) serves as cofactor.

The protein localises to the cytoplasm. It carries out the reaction Endonucleolytic cleavage to 5'-phosphomonoester.. In terms of biological role, digests double-stranded RNA. Involved in the processing of primary rRNA transcript to yield the immediate precursors to the large and small rRNAs (23S and 16S). Processes some mRNAs, and tRNAs when they are encoded in the rRNA operon. Processes pre-crRNA and tracrRNA of type II CRISPR loci if present in the organism. The polypeptide is Ribonuclease 3 (Pseudomonas putida (strain GB-1)).